The sequence spans 293 residues: DNA repair protein RecO (293 aa).

The protein belongs to the RecO family.

Its function is as follows. Involved in DNA repair and RecF pathway recombination. This Cyanothece sp. (strain PCC 7425 / ATCC 29141) protein is DNA repair protein RecO.